We begin with the raw amino-acid sequence, 374 residues long: Chaperone protein DnaJ (374 aa).

A J domain is found at 5–70 (DYYEVLGVER…SKRAAFDQYG (66 aa)). A CR-type zinc finger spans residues 133-211 (GTTVSIRVPT…CHGEGRVEEY (79 aa)). The Zn(2+) site is built by Cys-146, Cys-149, Cys-163, Cys-166, Cys-185, Cys-188, Cys-199, and Cys-202. 4 CXXCXGXG motif repeats span residues 146 to 153 (CQPCDGSG), 163 to 170 (CPTCGGIG), 185 to 192 (CPRCHGQG), and 199 to 206 (CTSCHGEG).

Belongs to the DnaJ family. As to quaternary structure, homodimer. Zn(2+) is required as a cofactor.

Its subcellular location is the cytoplasm. Participates actively in the response to hyperosmotic and heat shock by preventing the aggregation of stress-denatured proteins and by disaggregating proteins, also in an autonomous, DnaK-independent fashion. Unfolded proteins bind initially to DnaJ; upon interaction with the DnaJ-bound protein, DnaK hydrolyzes its bound ATP, resulting in the formation of a stable complex. GrpE releases ADP from DnaK; ATP binding to DnaK triggers the release of the substrate protein, thus completing the reaction cycle. Several rounds of ATP-dependent interactions between DnaJ, DnaK and GrpE are required for fully efficient folding. Also involved, together with DnaK and GrpE, in the DNA replication of plasmids through activation of initiation proteins. The chain is Chaperone protein DnaJ from Pseudomonas putida (strain GB-1).